Here is a 476-residue protein sequence, read N- to C-terminus: Aspartyl/glutamyl-tRNA(Asn/Gln) amidotransferase subunit B (476 aa).

It belongs to the GatB/GatE family. GatB subfamily. Heterotrimer of A, B and C subunits.

The enzyme catalyses L-glutamyl-tRNA(Gln) + L-glutamine + ATP + H2O = L-glutaminyl-tRNA(Gln) + L-glutamate + ADP + phosphate + H(+). It carries out the reaction L-aspartyl-tRNA(Asn) + L-glutamine + ATP + H2O = L-asparaginyl-tRNA(Asn) + L-glutamate + ADP + phosphate + 2 H(+). In terms of biological role, allows the formation of correctly charged Asn-tRNA(Asn) or Gln-tRNA(Gln) through the transamidation of misacylated Asp-tRNA(Asn) or Glu-tRNA(Gln) in organisms which lack either or both of asparaginyl-tRNA or glutaminyl-tRNA synthetases. The reaction takes place in the presence of glutamine and ATP through an activated phospho-Asp-tRNA(Asn) or phospho-Glu-tRNA(Gln). The protein is Aspartyl/glutamyl-tRNA(Asn/Gln) amidotransferase subunit B of Listeria welshimeri serovar 6b (strain ATCC 35897 / DSM 20650 / CCUG 15529 / CIP 8149 / NCTC 11857 / SLCC 5334 / V8).